Here is a 208-residue protein sequence, read N- to C-terminus: Protein-L-isoaspartate O-methyltransferase (208 aa).

Serine 59 is an active-site residue.

Belongs to the methyltransferase superfamily. L-isoaspartyl/D-aspartyl protein methyltransferase family.

It is found in the cytoplasm. It catalyses the reaction [protein]-L-isoaspartate + S-adenosyl-L-methionine = [protein]-L-isoaspartate alpha-methyl ester + S-adenosyl-L-homocysteine. Its function is as follows. Catalyzes the methyl esterification of L-isoaspartyl residues in peptides and proteins that result from spontaneous decomposition of normal L-aspartyl and L-asparaginyl residues. It plays a role in the repair and/or degradation of damaged proteins. In Escherichia coli O1:K1 / APEC, this protein is Protein-L-isoaspartate O-methyltransferase.